The following is a 25-amino-acid chain: Flagellar filament outer layer protein (25 aa).

As to quaternary structure, the flagellum consists of an outer layer composed of repeating units of FlaA around a core that contains several antigenically related polypeptides.

The protein resides in the periplasmic flagellum. Its subcellular location is the periplasm. Component of the outer layer of the flagella. In Treponema phagedenis, this protein is Flagellar filament outer layer protein (flaA).